Reading from the N-terminus, the 149-residue chain is Ribonuclease pancreatic (149 aa).

Residues 1-25 (MGLEKSLILLPLLVLVLAWVQPSLG) form the signal peptide. Residues Lys-32 and Arg-35 each contribute to the substrate site. His-37 acts as the Proton acceptor in catalysis. Intrachain disulfides connect Cys-51–Cys-109, Cys-65–Cys-120, Cys-83–Cys-135, and Cys-90–Cys-97. Residue 66–70 (KRVNT) coordinates substrate. Asn-87 carries N-linked (GlcNAc...) asparagine glycosylation. Residues Lys-91 and Arg-110 each contribute to the substrate site. His-144 (proton donor) is an active-site residue.

This sequence belongs to the pancreatic ribonuclease family. As to quaternary structure, monomer. Interacts with and forms tight 1:1 complexes with RNH1. Dimerization of two such complexes may occur. Interaction with RNH1 inhibits this protein. As to expression, pancreas.

It localises to the secreted. The enzyme catalyses an [RNA] containing cytidine + H2O = an [RNA]-3'-cytidine-3'-phosphate + a 5'-hydroxy-ribonucleotide-3'-[RNA].. It catalyses the reaction an [RNA] containing uridine + H2O = an [RNA]-3'-uridine-3'-phosphate + a 5'-hydroxy-ribonucleotide-3'-[RNA].. Its function is as follows. Endonuclease that catalyzes the cleavage of RNA on the 3' side of pyrimidine nucleotides. Acts on single-stranded and double-stranded RNA. The polypeptide is Ribonuclease pancreatic (RNASE1) (Acomys cahirinus (Cairo spiny mouse)).